The sequence spans 416 residues: POC1 centriolar protein homolog A (416 aa).

WD repeat units lie at residues 16–55 (GHRD…RAYR), 58–97 (GHKD…ESVL), 100–139 (AHTG…IICT), 142–181 (EHNN…LIHT), 184–223 (EPGG…LLQH), 226–265 (VHSA…LLYT), and 268–307 (GHQG…VDYS). A disordered region spans residues 311–340 (QQKRDHRTPSAQASGAAGDPESRSGQKTEV). The stretch at 380 to 412 (QLDVLTQTVAILEQRLTLTEDKLKECLEQQHQA) forms a coiled coil.

It belongs to the WD repeat POC1 family.

May play an important role in centriole assembly and/or stability and ciliogenesis. In Danio rerio (Zebrafish), this protein is POC1 centriolar protein homolog A.